Reading from the N-terminus, the 113-residue chain is Large ribosomal subunit protein uL22 (113 aa).

This sequence belongs to the universal ribosomal protein uL22 family. In terms of assembly, part of the 50S ribosomal subunit.

In terms of biological role, this protein binds specifically to 23S rRNA; its binding is stimulated by other ribosomal proteins, e.g. L4, L17, and L20. It is important during the early stages of 50S assembly. It makes multiple contacts with different domains of the 23S rRNA in the assembled 50S subunit and ribosome. Functionally, the globular domain of the protein is located near the polypeptide exit tunnel on the outside of the subunit, while an extended beta-hairpin is found that lines the wall of the exit tunnel in the center of the 70S ribosome. The protein is Large ribosomal subunit protein uL22 of Magnetococcus marinus (strain ATCC BAA-1437 / JCM 17883 / MC-1).